Here is a 56-residue protein sequence, read N- to C-terminus: Small ribosomal subunit protein uS14 (56 aa).

Positions 21, 24, 39, and 42 each coordinate Zn(2+).

The protein belongs to the universal ribosomal protein uS14 family. In terms of assembly, component of the 40S small ribosomal subunit. It depends on Zn(2+) as a cofactor.

Its subcellular location is the cytoplasm. The protein resides in the cytosol. It localises to the rough endoplasmic reticulum. This chain is Small ribosomal subunit protein uS14 (RpS29), found in Bombyx mori (Silk moth).